The primary structure comprises 154 residues: uncharacterized protein (154 aa).

This is an uncharacterized protein from Archaeoglobus fulgidus (strain ATCC 49558 / DSM 4304 / JCM 9628 / NBRC 100126 / VC-16).